A 201-amino-acid polypeptide reads, in one-letter code: FMN-dependent NADH:quinone oxidoreductase (201 aa).

FMN contacts are provided by residues 92-95 (MWNL) and 136-139 (STGG).

The protein belongs to the azoreductase type 1 family. In terms of assembly, homodimer. FMN is required as a cofactor.

The enzyme catalyses 2 a quinone + NADH + H(+) = 2 a 1,4-benzosemiquinone + NAD(+). It catalyses the reaction N,N-dimethyl-1,4-phenylenediamine + anthranilate + 2 NAD(+) = 2-(4-dimethylaminophenyl)diazenylbenzoate + 2 NADH + 2 H(+). Functionally, quinone reductase that provides resistance to thiol-specific stress caused by electrophilic quinones. Its function is as follows. Also exhibits azoreductase activity. Catalyzes the reductive cleavage of the azo bond in aromatic azo compounds to the corresponding amines. In Coprothermobacter proteolyticus (strain ATCC 35245 / DSM 5265 / OCM 4 / BT), this protein is FMN-dependent NADH:quinone oxidoreductase.